A 268-amino-acid polypeptide reads, in one-letter code: UPF0328 protein ECU09_2030 (268 aa).

It belongs to the UPF0328 family.

In Encephalitozoon cuniculi (strain GB-M1) (Microsporidian parasite), this protein is UPF0328 protein ECU09_2030.